A 1230-amino-acid chain; its full sequence is ABC transporter B family member 5 (1230 aa).

6 helical membrane passes run 27-47 (VLLM…SPLM), 78-98 (LVYL…CWMI), 154-174 (FIQL…RGWL), 177-197 (LVML…AIIV), 253-273 (GFVT…TYAL), and 286-306 (GYTG…SIAL). Positions 30-318 (MIVGSIGAIA…ASPCLTAFTA (289 aa)) constitute an ABC transmembrane type-1 1 domain. Residues 353–589 (IELRDVCFSY…HEGAYSQLLR (237 aa)) form the ABC transporter 1 domain. Residue 388-395 (GESGSGKS) coordinates ATP. Asn540, Asn615, and Asn616 each carry an N-linked (GlcNAc...) asparagine glycan. Residues 602–621 (ISDGSISSGSSRGNNSTRQD) are disordered. The segment covering 603–617 (SDGSISSGSSRGNNS) has biased composition (low complexity). A run of 2 helical transmembrane segments spans residues 662–682 (ILIL…IFGI) and 707–727 (MIFV…NYLF). Positions 663–950 (LILGTLVGAV…ASSFAPDSSK (288 aa)) constitute an ABC transmembrane type-1 2 domain. A glycan (N-linked (GlcNAc...) asparagine) is linked at Asn759. The next 3 helical transmembrane spans lie at 798–818 (IIAF…IPFI), 889–909 (GVGF…CFYV), and 924–944 (VFQV…ASSF). The region spanning 985-1223 (IELCHISFTY…EGGVYASLVQ (239 aa)) is the ABC transporter 2 domain. 1020-1027 (GESGSGKS) contributes to the ATP binding site. Residues Asn1074, Asn1174, and Asn1227 are each glycosylated (N-linked (GlcNAc...) asparagine).

It belongs to the ABC transporter superfamily. ABCB family. Multidrug resistance exporter (TC 3.A.1.201) subfamily.

The protein localises to the membrane. The sequence is that of ABC transporter B family member 5 (ABCB5) from Arabidopsis thaliana (Mouse-ear cress).